Reading from the N-terminus, the 183-residue chain is NAD(P)H-quinone oxidoreductase subunit I, chloroplastic (183 aa).

2 4Fe-4S ferredoxin-type domains span residues Gly-55 to Glu-84 and Lys-95 to Glu-124. [4Fe-4S] cluster contacts are provided by Cys-64, Cys-67, Cys-70, Cys-74, Cys-104, Cys-107, Cys-110, and Cys-114.

The protein belongs to the complex I 23 kDa subunit family. NDH is composed of at least 16 different subunits, 5 of which are encoded in the nucleus. It depends on [4Fe-4S] cluster as a cofactor.

It is found in the plastid. The protein localises to the chloroplast thylakoid membrane. It catalyses the reaction a plastoquinone + NADH + (n+1) H(+)(in) = a plastoquinol + NAD(+) + n H(+)(out). The catalysed reaction is a plastoquinone + NADPH + (n+1) H(+)(in) = a plastoquinol + NADP(+) + n H(+)(out). In terms of biological role, NDH shuttles electrons from NAD(P)H:plastoquinone, via FMN and iron-sulfur (Fe-S) centers, to quinones in the photosynthetic chain and possibly in a chloroplast respiratory chain. The immediate electron acceptor for the enzyme in this species is believed to be plastoquinone. Couples the redox reaction to proton translocation, and thus conserves the redox energy in a proton gradient. This Marchantia polymorpha (Common liverwort) protein is NAD(P)H-quinone oxidoreductase subunit I, chloroplastic.